A 408-amino-acid polypeptide reads, in one-letter code: Homogentisate geranylgeranyltransferase (408 aa).

Residues 1 to 62 (MQAVTAAAAA…TVMHKFSAIS (62 aa)) constitute a chloroplast transit peptide. The next 9 membrane-spanning stretches (helical) occupy residues 122–142 (HTIFGTIIGITSVSLLPMKSI), 156–176 (ALTAALCMNIYVVGLNQLYDI), 194–214 (SVATGVFLVLAFLIMSFSIGI), 221–241 (LMCALIVSFLLGSAYSIEAPF), 248–268 (ALLAASCILFVRAILVQLAFF), 286–306 (LVFATLFMCCFSAVIALFKDI), 329–349 (VYQLCISILLTAYGAATLVGA), 352–372 (TNLFQKIITVSGHGLLALTLW), and 386–406 (VTSFYMFIWKLFYAEYFLIPF).

The protein belongs to the UbiA prenyltransferase family. Expressed in seeds.

Its subcellular location is the plastid. It is found in the chloroplast membrane. It catalyses the reaction homogentisate + (2E,6E,10E)-geranylgeranyl diphosphate + H(+) = 6-geranylgeranyl-2-methylbenzene-1,4-diol + CO2 + diphosphate. The protein operates within cofactor biosynthesis; tocopherol biosynthesis. In terms of biological role, involved in the synthesis of tocotrienol (vitamin E). Catalyzes the condensation of homogentisate and geranylgeranyl diphosphate to form 2-methyl-6-geranylgeranylbenzoquinol. Possesses low activity with phytyl diphosphate as substrate. The protein is Homogentisate geranylgeranyltransferase of Hordeum vulgare (Barley).